The following is a 205-amino-acid chain: High frequency lysogenization protein HflD homolog (205 aa).

The protein belongs to the HflD family.

The protein resides in the cytoplasm. The protein localises to the cell inner membrane. This Vibrio cholerae serotype O1 (strain ATCC 39541 / Classical Ogawa 395 / O395) protein is High frequency lysogenization protein HflD homolog.